A 467-amino-acid chain; its full sequence is Glutamate--tRNA ligase (467 aa).

Residues Pro9–Gly19 carry the 'HIGH' region motif. Residues Lys237–Arg241 carry the 'KMSKS' region motif. Lys240 serves as a coordination point for ATP.

Belongs to the class-I aminoacyl-tRNA synthetase family. Glutamate--tRNA ligase type 1 subfamily. Monomer.

It localises to the cytoplasm. It catalyses the reaction tRNA(Glu) + L-glutamate + ATP = L-glutamyl-tRNA(Glu) + AMP + diphosphate. Catalyzes the attachment of glutamate to tRNA(Glu) in a two-step reaction: glutamate is first activated by ATP to form Glu-AMP and then transferred to the acceptor end of tRNA(Glu). The protein is Glutamate--tRNA ligase of Xanthomonas campestris pv. campestris (strain 8004).